The following is a 141-amino-acid chain: Large ribosomal subunit protein uL11 (141 aa).

It belongs to the universal ribosomal protein uL11 family. As to quaternary structure, part of the ribosomal stalk of the 50S ribosomal subunit. Interacts with L10 and the large rRNA to form the base of the stalk. L10 forms an elongated spine to which L12 dimers bind in a sequential fashion forming a multimeric L10(L12)X complex.

Forms part of the ribosomal stalk which helps the ribosome interact with GTP-bound translation factors. This chain is Large ribosomal subunit protein uL11, found in Acidianus ambivalens (Desulfurolobus ambivalens).